Reading from the N-terminus, the 329-residue chain is Putative HTH-type transcriptional regulatory protein APE_0778 (329 aa).

Residues 142–200 (LREKRLEKGLSLGHLAYMLKTSRKSIYEYERGVMSPSVEKAEKLVDILGEEILEPIDIL) enclose the HTH cro/C1-type domain. The segment at residues 153–172 (LGHLAYMLKTSRKSIYEYER) is a DNA-binding region (H-T-H motif).

The chain is Putative HTH-type transcriptional regulatory protein APE_0778 from Aeropyrum pernix (strain ATCC 700893 / DSM 11879 / JCM 9820 / NBRC 100138 / K1).